Consider the following 239-residue polypeptide: UPF0502 protein Bcen_5249 (239 aa).

Residues Ile196 to Ser239 form a disordered region. A compositionally biased stretch (basic residues) spans Thr224–Arg233.

It belongs to the UPF0502 family.

This is UPF0502 protein Bcen_5249 from Burkholderia orbicola (strain AU 1054).